We begin with the raw amino-acid sequence, 612 residues long: Apoptosis-inducing factor 1, mitochondrial (612 aa).

2 short sequence motifs (mitochondrial localization signal) span residues 1-30 and 62-88; these read MFRC…PKQR and KMDN…KTIK. A mitochondrion-targeting transit peptide spans 1-54; it reads MFRCGGLAGAFKQKLVPLVRTVYVQRPKQRNRLPGNLFQQWRVPLELQMARQMA. Positions 55–101 are cleaved as a propeptide — removed in mature form; that stretch reads SSGSSGGKMDNSVLVLIVGLSTIGAGAYAYKTIKEDQKRYNERVMGL. N6-succinyllysine is present on lysine 108. Residue serine 115 is modified to Phosphoserine. Residues 133–482 form an FAD-dependent oxidoreductase region; it reads FLLIGGGTAA…KPYWHQSMFW (350 aa). Residues 137 to 141, 163 to 164, arginine 171, and lysine 176 contribute to the FAD site; these read GGGTA and ED. Tryptophan 195 contributes to the NAD(+) binding site. Position 232 (valine 232) interacts with FAD. Residue lysine 254 forms a Glycyl lysine isopeptide (Lys-Gly) (interchain with G-Cter in ubiquitin) linkage. Serine 267 carries the post-translational modification Phosphoserine. An FAD-binding site is contributed by arginine 284. Residues 307 to 310, glutamate 335, and lysine 341 contribute to the NAD(+) site; that span reads GGFL. Serine 370 is subject to Phosphoserine. Residue lysine 387 is modified to N6-acetyllysine. Glycine 398 is an NAD(+) binding site. Aspartate 437 contacts FAD. Positions 445–450 match the Nuclear localization signal motif; sequence KLGRRR. Residues 452-453, tryptophan 482, and glutamate 492 contribute to the NAD(+) site; that span reads EH. Residues 453–454 and tryptophan 482 each bind FAD; that span reads HH. Residues 512 to 528 are compositionally biased toward polar residues; the sequence is AQDNPKSATEQSGTGIR. The tract at residues 512-551 is disordered; sequence AQDNPKSATEQSGTGIRSESETESEASEITIPPSAPAVPQ. Phosphothreonine is present on threonine 520. Serine 523 and serine 529 each carry phosphoserine. Asparagine 582 serves as a coordination point for NAD(+). Lysine 592 bears the N6-acetyllysine mark.

It belongs to the FAD-dependent oxidoreductase family. As to quaternary structure, monomer (oxidized form). Homodimer (reduced form). Upon reduction with NADH, undergoes dimerization and forms tight, long-lived FADH2-NAD charge transfer complexes (CTC) resistant to oxidation. Also dimerizes with isoform 3 preventing its release from mitochondria. Interacts with XIAP/BIRC4. Interacts (via N-terminus) with EIF3G (via C-terminus). Interacts with PRELID1. Interacts with CHCHD4; the interaction increases in presence of NADH. Interacts with processed form of PARP1 (Poly [ADP-ribose] polymerase 1, processed C-terminus); interaction is mediated with poly-ADP-ribose chains attached to PARP1, promoting translocation into the nucleus. FAD is required as a cofactor. In terms of processing, under normal conditions, a 54-residue N-terminal segment is first proteolytically removed during or just after translocation into the mitochondrial intermembrane space (IMS) by the mitochondrial processing peptidase (MPP) to form the inner-membrane-anchored mature form (AIFmit). During apoptosis, it is further proteolytically processed at amino-acid position 101 leading to the generation of the mature form, which is confined to the mitochondrial IMS in a soluble form (AIFsol). AIFsol is released to the cytoplasm in response to specific death signals, and translocated to the nucleus, where it induces nuclear apoptosis in a caspase-independent manner. Ubiquitination by XIAP/BIRC4 does not lead to proteasomal degradation. Ubiquitination at Lys-254 by XIAP/BIRC4 blocks its ability to bind DNA and induce chromatin degradation, thereby inhibiting its ability to induce cell death. Expressed in cortical neurons (at protein level). In terms of tissue distribution, expressed in liver (at protein level).

The protein localises to the mitochondrion intermembrane space. It localises to the mitochondrion inner membrane. The protein resides in the cytoplasm. It is found in the nucleus. Its subcellular location is the perinuclear region. The protein localises to the mitochondrion. It localises to the cytosol. The enzyme catalyses A + NADH + H(+) = AH2 + NAD(+). Functionally, functions both as NADH oxidoreductase and as regulator of apoptosis. In response to apoptotic stimuli, it is released from the mitochondrion intermembrane space into the cytosol and to the nucleus, where it functions as a proapoptotic factor in a caspase-independent pathway. Release into the cytoplasm is mediated upon binding to poly-ADP-ribose chains. The soluble form (AIFsol) found in the nucleus induces 'parthanatos' i.e. caspase-independent fragmentation of chromosomal DNA. Binds to DNA in a sequence-independent manner. Interacts with EIF3G, and thereby inhibits the EIF3 machinery and protein synthesis, and activates caspase-7 to amplify apoptosis. Plays a critical role in caspase-independent, pyknotic cell death in hydrogen peroxide-exposed cells. In contrast, participates in normal mitochondrial metabolism. Plays an important role in the regulation of respiratory chain biogenesis by interacting with CHCHD4 and controlling CHCHD4 mitochondrial import. This is Apoptosis-inducing factor 1, mitochondrial from Mus musculus (Mouse).